Reading from the N-terminus, the 517-residue chain is Zinc finger protein 215 (517 aa).

Positions 48-126 constitute an SCAN box domain; the sequence is RQKFRHFQYL…EDMVTLIEDV (79 aa). Positions 164 to 237 constitute a KRAB domain; sequence VTFKDVVVEF…EKEIPRKTIF (74 aa). 4 C2H2-type zinc fingers span residues 379-401, 407-429, 462-484, and 490-512; these read YECY…QIIH, YKCS…QKLH, YECV…QMIH, and FKCK…QKLH.

Belongs to the krueppel C2H2-type zinc-finger protein family.

The protein localises to the nucleus. Functionally, may be involved in transcriptional regulation. The chain is Zinc finger protein 215 (ZNF215) from Pongo abelii (Sumatran orangutan).